Reading from the N-terminus, the 584-residue chain is Galectin-3-binding protein (584 aa).

A signal peptide spans 1-18; it reads MTPPRLFWVWLLVAGTQG. The SRCR domain maps to 24–124; that stretch reads MRLADGGATN…HERDAGVVCT (101 aa). 3 disulfides stabilise this stretch: Cys-49-Cys-113, Cys-62-Cys-123, and Cys-93-Cys-103. A glycan (N-linked (GlcNAc...) asparagine) is linked at Asn-69. N-linked (GlcNAc...) asparagine glycans are attached at residues Asn-125 and Asn-192. Residues 153 to 221 enclose the BTB domain; the sequence is CDLSISVNVQ…FYSRRIDITL (69 aa). Residues 260–359 enclose the BACK domain; the sequence is PLDLYAYAVA…MLPEELFELQ (100 aa). Residues Asn-361, Asn-397, Asn-550, and Asn-579 are each glycosylated (N-linked (GlcNAc...) asparagine).

As to quaternary structure, homodimers and homomultimers. The multimers form ring-like structures with a diameter of 30-40 nm. Binds LGALS1 and LGALS3. Binds ITGB1, COL4A1, COL5A1, COL6A1, FN1 and NID. Interacts with the gamma-tubulin ring complex (gamma-TuRC), composed of gamma-tubulin, TUBGCP2, TUBGCP3, TUBGCP4, TUBGCP5 and TUBGCP6. The unglycosylated form interacts with PDE4DIP; this interaction, which is PDE4DIP isoform-specific, may connect a pericentrosomal complex, made of AKAP9, CDK5RAP2, EB1/MAPRE1 and PDE4DIP, to the gamma-tubulin ring complex (gamma-TuRC) to promote microtubule assembly and acetylation.

It is found in the secreted. The protein localises to the extracellular space. The protein resides in the extracellular matrix. In terms of biological role, promotes integrin-mediated cell adhesion. May stimulate host defense against viruses and tumor cells. The protein is Galectin-3-binding protein (LGALS3BP) of Pongo abelii (Sumatran orangutan).